We begin with the raw amino-acid sequence, 240 residues long: 2,3,4,5-tetrahydropyridine-2,6-dicarboxylate N-acetyltransferase (240 aa).

Belongs to the transferase hexapeptide repeat family. DapH subfamily.

It catalyses the reaction (S)-2,3,4,5-tetrahydrodipicolinate + acetyl-CoA + H2O = L-2-acetamido-6-oxoheptanedioate + CoA. It participates in amino-acid biosynthesis; L-lysine biosynthesis via DAP pathway; LL-2,6-diaminopimelate from (S)-tetrahydrodipicolinate (acetylase route): step 1/3. Catalyzes the transfer of an acetyl group from acetyl-CoA to tetrahydrodipicolinate. This Staphylococcus epidermidis (strain ATCC 35984 / DSM 28319 / BCRC 17069 / CCUG 31568 / BM 3577 / RP62A) protein is 2,3,4,5-tetrahydropyridine-2,6-dicarboxylate N-acetyltransferase.